We begin with the raw amino-acid sequence, 333 residues long: SKIGINGFGRIGRLVLRAALSCGAQVVAVNDPFIALEYMVYMFKYDSTHGVFKGEVKMEDGALVVDGKKITVFNEMKPENIPWSKAGAEYIVESTGVFTTIEKASAHFKGGAKKVVISAPSADAPMFVCGVNLEKYSKDMTVVSNASCTTNCLAPVAKVLHENFEIVEGLMTTVHAVTATQKTVDGPSAKDWRGGRGAAQNIIPSSTGAAKAVGKVIPELDGKLTGMAFRVPTPDVSVVDLTVRLGKECSYDDIKAAMKTASEGPLQGFLGYTEDDVVSSDFIGDNRSSIFDAKAGIQLSKTFVKVVSWYDNEFGYSQRVIDLLKHMQKVDSA.

Ser1 bears the N-acetylserine mark. NAD(+) is bound by residues 10 to 11 (RI), Asp31, and Ser118. D-glyceraldehyde 3-phosphate contacts are provided by residues 147–149 (SCT), Thr178, 207–208 (TG), and Arg230. The active-site Nucleophile is Cys148. Asn312 contacts NAD(+).

The protein belongs to the glyceraldehyde-3-phosphate dehydrogenase family. In terms of assembly, homotetramer.

The protein localises to the cytoplasm. It catalyses the reaction D-glyceraldehyde 3-phosphate + phosphate + NAD(+) = (2R)-3-phospho-glyceroyl phosphate + NADH + H(+). It participates in carbohydrate degradation; glycolysis; pyruvate from D-glyceraldehyde 3-phosphate: step 1/5. This is Glyceraldehyde-3-phosphate dehydrogenase from Homarus americanus (American lobster).